Reading from the N-terminus, the 382-residue chain is D-galactonate dehydratase (382 aa).

Asp183 serves as a coordination point for Mg(2+). His185 functions as the Proton donor in the catalytic mechanism. 2 residues coordinate Mg(2+): Glu209 and Glu235. His285 (proton acceptor) is an active-site residue.

It belongs to the mandelate racemase/muconate lactonizing enzyme family. GalD subfamily. Requires Mg(2+) as cofactor.

The catalysed reaction is D-galactonate = 2-dehydro-3-deoxy-D-galactonate + H2O. The protein operates within carbohydrate acid metabolism; D-galactonate degradation; D-glyceraldehyde 3-phosphate and pyruvate from D-galactonate: step 1/3. Catalyzes the dehydration of D-galactonate to 2-keto-3-deoxy-D-galactonate. The polypeptide is D-galactonate dehydratase (Cronobacter sakazakii (strain ATCC BAA-894) (Enterobacter sakazakii)).